A 408-amino-acid polypeptide reads, in one-letter code: Aspartate aminotransferase (408 aa).

Residues Gly45, Trp134, and Asn184 each contribute to the L-aspartate site. N6-(pyridoxal phosphate)lysine is present on Lys247. Residue Arg382 participates in L-aspartate binding.

This sequence belongs to the class-I pyridoxal-phosphate-dependent aminotransferase family. Homodimer. Pyridoxal 5'-phosphate serves as cofactor.

The protein localises to the cytoplasm. The catalysed reaction is L-aspartate + 2-oxoglutarate = oxaloacetate + L-glutamate. Functionally, catalyzes the reversible conversion of aspartate and 2-oxoglutarate to glutamate and oxaloacetate. Does not have prephenate aminotransferase activity. This Streptomyces avermitilis (strain ATCC 31267 / DSM 46492 / JCM 5070 / NBRC 14893 / NCIMB 12804 / NRRL 8165 / MA-4680) protein is Aspartate aminotransferase.